The chain runs to 647 residues: DNA mismatch repair protein MutL (647 aa).

Belongs to the DNA mismatch repair MutL/HexB family.

This protein is involved in the repair of mismatches in DNA. It is required for dam-dependent methyl-directed DNA mismatch repair. May act as a 'molecular matchmaker', a protein that promotes the formation of a stable complex between two or more DNA-binding proteins in an ATP-dependent manner without itself being part of a final effector complex. The sequence is that of DNA mismatch repair protein MutL from Bacillus cereus (strain 03BB102).